A 296-amino-acid chain; its full sequence is Putative peptide transport system permease protein BruAb2_1032 (296 aa).

6 helical membrane passes run 35–55 (IGLVLLLIVVLAAVLAPWITN), 97–117 (LWIGLTVAVLSAILGAIIGIA), 131–151 (VMDALMAFPAILLAIGISAAL), 205–225 (ILPNCLAPLLVTLTFVFAYAI), 229–249 (ATLSFLGIGTPPPHASWGSIV), and 260–280 (WWIMLFPGIAITISALAINLI). The region spanning 97-281 (LWIGLTVAVL…ISALAINLIG (185 aa)) is the ABC transmembrane type-1 domain.

This sequence belongs to the binding-protein-dependent transport system permease family. As to quaternary structure, the complex is composed of two ATP-binding proteins (BruAb2_1033 and BruAb2_1034), two transmembrane proteins (BruAb2_1031 and BruAb2_1032) and a solute-binding protein (BruAb2_1030).

The protein localises to the cell inner membrane. In terms of biological role, probably part of an ABC transporter complex that could be involved in peptide import. Probably responsible for the translocation of the substrate across the membrane. This is Putative peptide transport system permease protein BruAb2_1032 from Brucella abortus biovar 1 (strain 9-941).